The following is a 1816-amino-acid chain: Laminin subunit alpha-4 (1816 aa).

The signal sequence occupies residues 1-24; sequence MGWSTAWCSVLALWLLWCAVCSNA. Residue Ser-39 is glycosylated (O-linked (Xyl...) (chondroitin sulfate) serine). Cystine bridges form between Cys-82–Cys-91, Cys-84–Cys-98, Cys-101–Cys-110, Cys-113–Cys-129, Cys-132–Cys-146, Cys-134–Cys-155, Cys-157–Cys-166, Cys-169–Cys-184, Cys-187–Cys-202, Cys-189–Cys-209, Cys-212–Cys-221, and Cys-224–Cys-238. 3 consecutive Laminin EGF-like domains span residues 82–131, 132–186, and 187–240; these read CDCN…FCQP, CPCP…TCKK, and CDCS…NCAV. The N-linked (GlcNAc...) asparagine glycan is linked to Asn-104. An N-linked (GlcNAc...) asparagine glycan is attached at Asn-215. A Laminin EGF-like 4; truncated domain is found at 241-255; sequence CNCGGGPCDSVTGEC. Residues 256 to 825 form a domain II and I region; it reads LEEGFEVPTG…AQTRSVASKI (570 aa). N-linked (GlcNAc...) asparagine glycans are attached at residues Asn-308, Asn-333, Asn-458, Asn-550, Asn-571, Asn-574, Asn-631, and Asn-639. A coiled-coil region spans residues 431-523; sequence THRELVDEEA…ERVKEQMEVV (93 aa). Residues 556–604 adopt a coiled-coil conformation; sequence AEIDGAKNELQGKLSNLSNLSHDLVQEATDHAYNLQQEADELSRNLHSS. Positions 655-717 form a coiled coil; it reads IIYHKDESDN…AVKQLQAAER (63 aa). The Cell attachment site signature appears at 717 to 719; it reads RGD. N-linked (GlcNAc...) asparagine glycans are attached at residues Asn-735, Asn-751, Asn-754, Asn-780, and Asn-803. The stretch at 770–799 forms a coiled coil; that stretch reads AVDSARDAVRNLTEVVPQLLDQLRTVEQKR. Laminin G-like domains follow at residues 826–1030, 1042–1222, and 1229–1397; these read QVSM…SVPC, AASY…GYGC, and SRRA…LYEC. An intrachain disulfide couples Cys-1000 to Cys-1030. Residue Asn-1088 is glycosylated (N-linked (GlcNAc...) asparagine). Residues Cys-1196 and Cys-1222 are joined by a disulfide bond. N-linked (GlcNAc...) asparagine glycans are attached at residues Asn-1283 and Asn-1361. A disulfide bridge links Cys-1365 with Cys-1397. The span at 1409 to 1419 shows a compositional bias: basic residues; sequence KKGKNSSKPKT. A disordered region spans residues 1409-1433; the sequence is KKGKNSSKPKTNKQGEKSKDAPSWD. A compositionally biased stretch (basic and acidic residues) spans 1421 to 1430; that stretch reads KQGEKSKDAP. Laminin G-like domains follow at residues 1462–1633 and 1640–1813; these read AYQY…VTPC and TGTY…INSC. Cystine bridges form between Cys-1610/Cys-1633 and Cys-1785/Cys-1813.

As to quaternary structure, laminin is a complex glycoprotein, consisting of three different polypeptide chains (alpha, beta, gamma), which are bound to each other by disulfide bonds into a cross-shaped molecule comprising one long and three short arms with globules at each end. Alpha-4 is a subunit of laminin-8 (laminin-411), laminin-9 (laminin-421) and laminin-14 (laminin-423). In terms of tissue distribution, strongly expressed in peripheral nerves, cardiac muscle, fat, dermis, lung stroma, aortic endothelium, endocardium and endothelium of blood vessels in skin and brain.

Its subcellular location is the secreted. The protein resides in the extracellular space. The protein localises to the extracellular matrix. It is found in the basement membrane. Functionally, binding to cells via a high affinity receptor, laminin is thought to mediate the attachment, migration and organization of cells into tissues during embryonic development by interacting with other extracellular matrix components. In Mus musculus (Mouse), this protein is Laminin subunit alpha-4 (Lama4).